Here is a 138-residue protein sequence, read N- to C-terminus: Protein SPMIP3 (138 aa).

The polypeptide is Protein SPMIP3 (SPMIP3) (Bos taurus (Bovine)).